The chain runs to 542 residues: Chaperonin GroEL (542 aa).

Residues 29–32, 86–90, G413, 476–478, and D492 contribute to the ATP site; these read TLGP, DGTTT, and NAA.

The protein belongs to the chaperonin (HSP60) family. As to quaternary structure, forms a cylinder of 14 subunits composed of two heptameric rings stacked back-to-back. Interacts with the co-chaperonin GroES.

The protein localises to the cytoplasm. The catalysed reaction is ATP + H2O + a folded polypeptide = ADP + phosphate + an unfolded polypeptide.. In terms of biological role, together with its co-chaperonin GroES, plays an essential role in assisting protein folding. The GroEL-GroES system forms a nano-cage that allows encapsulation of the non-native substrate proteins and provides a physical environment optimized to promote and accelerate protein folding. This is Chaperonin GroEL from Lactococcus lactis subsp. lactis (strain IL1403) (Streptococcus lactis).